A 74-amino-acid chain; its full sequence is RFTFDCPGMMGQRYLYEQVEQVCDDCYNLYREEKIAVNCRENCFLNSWFTVCLQATMREHETPRFDIWRSILKA.

Disulfide bonds link cysteine 6-cysteine 43, cysteine 23-cysteine 39, and cysteine 26-cysteine 52. Position 74 is an alanine amide (alanine 74).

The protein localises to the secreted. Functionally, inhibits Y-organs where molting hormone (ecdysteroid) is secreted. A molting cycle is initiated when MIH secretion diminishes or stops. Has little or no hyperglycemic activity. In Jasus lalandii (Cape rock lobster), this protein is Probable molt-inhibiting hormone.